We begin with the raw amino-acid sequence, 406 residues long: Glycosylated lysosomal membrane protein (406 aa).

The N-terminal stretch at 1–35 (MRGSVECTWGWGHCAPSPLLLWTLLLFAAPFGLLG) is a signal peptide. Residues 36–372 (EKTRQVSLEV…VDGLSPLVLG (337 aa)) are Lumenal-facing. N-linked (GlcNAc...) asparagine glycosylation is found at N65, N134, N159, N187, and N230. A helical membrane pass occupies residues 373 to 393 (IMAVALGAPGLMLLGGGLVLL). Topologically, residues 394–406 (LHHKKYSEYQSIN) are cytoplasmic. Residues 402 to 406 (YQSIN) carry the Lysosomal targeting motif motif.

This sequence belongs to the GLMP family. Interacts (via lumenal domain) with lysosomal protein MFSD1; the interaction starts while both proteins are still in the endoplasmic reticulum and is required for stabilization of MFSD1 in lysosomes but has no direct effect on its targeting to lysosomes or transporter activity. Post-translationally, highly N-glycosylated. N-glycosylation is essential for GLMP stability and for MFSD1 lysosomal localization.

The protein resides in the lysosome membrane. In terms of biological role, required to protect lysosomal transporter MFSD1 from lysosomal proteolysis and for MFSD1 lysosomal localization. The sequence is that of Glycosylated lysosomal membrane protein from Homo sapiens (Human).